The sequence spans 830 residues: Lon protease (830 aa).

The segment at 1–28 (MTFDTNDDSIAKNSLAPYNQETEQQQEE) is disordered. One can recognise a Lon N-terminal domain in the interval 50–245 (IPILPLRDVV…LVITHLTHEA (196 aa)). 397–404 (GPPGVGKT) contributes to the ATP binding site. In terms of domain architecture, Lon proteolytic spans 633 to 814 (TLPPGVALGL…DEVLPLAFSE (182 aa)). Active-site residues include Ser720 and Lys763.

It belongs to the peptidase S16 family. Homohexamer. Organized in a ring with a central cavity.

It localises to the cytoplasm. The enzyme catalyses Hydrolysis of proteins in presence of ATP.. ATP-dependent serine protease that mediates the selective degradation of mutant and abnormal proteins as well as certain short-lived regulatory proteins. Required for cellular homeostasis and for survival from DNA damage and developmental changes induced by stress. Degrades polypeptides processively to yield small peptide fragments that are 5 to 10 amino acids long. Binds to DNA in a double-stranded, site-specific manner. This is Lon protease from Lawsonia intracellularis (strain PHE/MN1-00).